The primary structure comprises 127 residues: Large ribosomal subunit protein bL12 (127 aa).

This sequence belongs to the bacterial ribosomal protein bL12 family. As to quaternary structure, homodimer. Part of the ribosomal stalk of the 50S ribosomal subunit. Forms a multimeric L10(L12)X complex, where L10 forms an elongated spine to which 2 to 4 L12 dimers bind in a sequential fashion. Binds GTP-bound translation factors.

Its function is as follows. Forms part of the ribosomal stalk which helps the ribosome interact with GTP-bound translation factors. Is thus essential for accurate translation. This Clavibacter michiganensis subsp. michiganensis (strain NCPPB 382) protein is Large ribosomal subunit protein bL12.